The primary structure comprises 253 residues: A-type ATP synthase subunit B (253 aa).

This sequence belongs to the ATPase alpha/beta chains family. In terms of assembly, has multiple subunits with at least A(3), B(3), C, D, E, F, H, I and proteolipid K(x).

The protein localises to the cell membrane. In terms of biological role, component of the A-type ATP synthase that produces ATP from ADP in the presence of a proton gradient across the membrane. The B chain is a regulatory subunit. This is A-type ATP synthase subunit B from Methanothermococcus thermolithotrophicus (Methanococcus thermolithotrophicus).